The chain runs to 204 residues: Serotonin N-acetyltransferase (204 aa).

Residue Thr-28 is modified to Phosphothreonine; by PKA. The region spanning 32–193 (SEFRCLTPED…SFTELHCSLQ (162 aa)) is the N-acetyltransferase domain. Leu-121 is a binding site for substrate. Residues 121-123 (LAV) and 129-134 (QQGRGP) contribute to the acetyl-CoA site. Met-156 provides a ligand contact to substrate. 165–167 (YER) contributes to the acetyl-CoA binding site. Ser-202 bears the Phosphoserine mark.

This sequence belongs to the acetyltransferase family. AANAT subfamily. As to quaternary structure, monomer. Interacts with several 14-3-3 proteins, including YWHAB, YWHAE, YWHAG and YWHAZ, preferentially when phosphorylated at Thr-28. Phosphorylation on Ser-202 also allows binding to YWHAZ, but with lower affinity. The interaction with YWHAZ considerably increases affinity for arylalkylamines and acetyl-CoA and protects the enzyme from dephosphorylation and proteasomal degradation. It may also prevent thiol-dependent inactivation. In terms of processing, cAMP-dependent phosphorylation regulates AANAT activity by promoting interaction with 14-3-3 proteins. Phosphorylation levels exhibit night/day variations, with an increase during nighttime. In terms of tissue distribution, highly expressed in pineal gland and in the photoreceptor outer segments in the retina. Expressed at about 100-fold lower levels in the pituitary gland and testis. Not detected in other tissues.

Its subcellular location is the cytoplasm. It carries out the reaction a 2-arylethylamine + acetyl-CoA = an N-acetyl-2-arylethylamine + CoA + H(+). It functions in the pathway aromatic compound metabolism; melatonin biosynthesis; melatonin from serotonin: step 1/2. Its function is as follows. Controls the night/day rhythm of melatonin production in the pineal gland. Catalyzes the N-acetylation of serotonin into N-acetylserotonin, the penultimate step in the synthesis of melatonin. This chain is Serotonin N-acetyltransferase (AANAT), found in Macaca mulatta (Rhesus macaque).